We begin with the raw amino-acid sequence, 407 residues long: L-cysteine:1D-myo-inositol 2-amino-2-deoxy-alpha-D-glucopyranoside ligase (407 aa).

A disordered region spans residues 1 to 22; it reads MRSWSAPDIVPLPGTGGPLRVH. A Zn(2+)-binding site is contributed by cysteine 43. Residues 43–46, threonine 58, and 81–83 each bind L-cysteinyl-5'-AMP; these read CGIT and NTT. A 'HIGH' region motif is present at residues 45–55; sequence ITPYDAAHLGH. The 'ERGGDP' region signature appears at 183–188; that stretch reads ERGGDP. Tryptophan 223 lines the L-cysteinyl-5'-AMP pocket. Cysteine 227 contacts Zn(2+). An L-cysteinyl-5'-AMP-binding site is contributed by 245 to 247; sequence GSD. Histidine 252 is a binding site for Zn(2+). Valine 278 is a binding site for L-cysteinyl-5'-AMP. The short motif at 284–288 is the 'KMSKS' region element; sequence KMSKS.

It belongs to the class-I aminoacyl-tRNA synthetase family. MshC subfamily. As to quaternary structure, monomer. Zn(2+) serves as cofactor.

It catalyses the reaction 1D-myo-inositol 2-amino-2-deoxy-alpha-D-glucopyranoside + L-cysteine + ATP = 1D-myo-inositol 2-(L-cysteinylamino)-2-deoxy-alpha-D-glucopyranoside + AMP + diphosphate + H(+). Catalyzes the ATP-dependent condensation of GlcN-Ins and L-cysteine to form L-Cys-GlcN-Ins. The polypeptide is L-cysteine:1D-myo-inositol 2-amino-2-deoxy-alpha-D-glucopyranoside ligase (Nocardiopsis dassonvillei (strain ATCC 23218 / DSM 43111 / CIP 107115 / JCM 7437 / KCTC 9190 / NBRC 14626 / NCTC 10488 / NRRL B-5397 / IMRU 509) (Actinomadura dassonvillei)).